Here is a 1980-residue protein sequence, read N- to C-terminus: Unconventional myosin-IXb (1980 aa).

S2 is modified (N-acetylserine). Residues 15–114 (ATFHLHIYPQ…YYFLLQERNA (100 aa)) form the Ras-associating domain. The 809-residue stretch at 146–954 (ADFDDLCNLP…ERQALQERLH (809 aa)) folds into the Myosin motor domain. 239–246 (GESGSGKT) is an ATP binding site. The segment at 715–736 (GVSSPVTRSHVEELPRGANTPS) is disordered. Residues S717 and S718 each carry the phosphoserine modification. The actin-binding stretch occupies residues 845–856 (KAEPFFIRCIRS). The neck or regulatory domain stretch occupies residues 941-1045 (LKETERQALQ…CRGHLQRRSF (105 aa)). IQ domains follow at residues 958–978 (LRRILLLQSWFRMVLERRHFV), 981–1001 (KHAALTIQACWRSYRVRRTLE), 1002–1024 (RTRAAVYLQAAWRGYLQRQAYHH), and 1025–1054 (QRHSIIRLQSLCRGHLQRRSFSQMMLEKQK). The residue at position 1046 (S1046) is a Phosphoserine. The interval 1046–1980 (SQMMLEKQKA…ERAVRGAAEE (935 aa)) is tail. Disordered stretches follow at residues 1049 to 1281 (MLEK…HPDT), 1302 to 1380 (SQSL…QGDS), and 1394 to 1449 (DKKP…NRKV). Residues 1097 to 1106 (TWMNSKSPNG) show a composition bias toward polar residues. Phosphoserine is present on residues S1108, S1115, and S1177. Composition is skewed to basic and acidic residues over residues 1129–1177 (ESHE…RKAS) and 1186–1195 (EDTKEPREDG). Residues S1220, S1222, S1229, S1237, S1243, and S1247 each carry the phosphoserine modification. Residues 1235–1247 (RVSPVLPSSSLES) are compositionally biased toward low complexity. Over residues 1250–1265 (DEDKGENSTKVQDKPE) the composition is skewed to basic and acidic residues. 3 positions are modified to phosphoserine: S1266, S1268, and S1304. T1319 is modified (phosphothreonine). Phosphoserine occurs at positions 1327, 1329, and 1337. Positions 1327–1344 (SFSTSDVSKLSPVKTSTE) are enriched in polar residues. A Phorbol-ester/DAG-type zinc finger spans residues 1592–1641 (GHVFASYQVNIPQSCEQCLSYIWLMDKALLCSVCKMTCHKKCVHKIQSYC). S1649 bears the Phosphoserine mark. Residues 1663–1848 (DSLTSDKASV…MLIKEQMRKY (186 aa)) form the Rho-GAP domain. An interaction with RHOA region spans residues 1699 to 1704 (AANRTR). Positions 1841–1861 (IKEQMRKYKVKMEEINHLEAA) form a coiled coil. The residue at position 1886 (S1886) is a Phosphoserine. The tract at residues 1891–1923 (VRTKSPRTPVVQDLEELGALPEEAAGGDEDREK) is disordered. The stretch at 1918–1948 (DEDREKEILMERIQSIKEEKEDITYRLPELD) forms a coiled coil. Phosphoserine is present on residues S1932, S1952, and S1959. Basic and acidic residues predominate over residues 1937-1953 (KEDITYRLPELDPRGSD). The interval 1937-1980 (KEDITYRLPELDPRGSDEENLDSETSASTESLLEERAVRGAAEE) is disordered. Phosphothreonine is present on T1965. Residues 1969–1980 (LEERAVRGAAEE) show a composition bias toward basic and acidic residues.

It belongs to the TRAFAC class myosin-kinesin ATPase superfamily. Myosin family. As to quaternary structure, interacts (via IQ domains) with CALM. Interacts with RHOA. Interacts (via Rho-GAP domain) with ROBO1; this inhibits the interaction with RHOA and the stimulation of RHOA GTPase activity, and thereby increases the levels of active RHOA. Expressed in testis, lung, thymus, brain, liver, spleen and heart muscle. Detected in lung, testis, spleen and liver, and at reduced level in different brain regions (at protein level).

Its subcellular location is the cytoplasm. It is found in the cell cortex. The protein resides in the perinuclear region. It localises to the cytoskeleton. Myosins are actin-based motor molecules with ATPase activity. Unconventional myosins serve in intracellular movements. Binds actin with high affinity both in the absence and presence of ATP and its mechanochemical activity is inhibited by calcium ions. Also acts as a GTPase activator for RHOA. Plays a role in the regulation of cell migration via its role as RHOA GTPase activator. This is regulated by its interaction with the SLIT2 receptor ROBO1; interaction with ROBO1 impairs interaction with RHOA and subsequent activation of RHOA GTPase activity, and thereby leads to increased levels of active, GTP-bound RHOA. In Rattus norvegicus (Rat), this protein is Unconventional myosin-IXb (Myo9b).